The sequence spans 140 residues: Nucleoside diphosphate kinase (140 aa).

6 residues coordinate ATP: Lys11, Phe59, Arg87, Thr93, Arg104, and Asn114. His117 serves as the catalytic Pros-phosphohistidine intermediate.

This sequence belongs to the NDK family. In terms of assembly, homotetramer. Requires Mg(2+) as cofactor.

It is found in the cytoplasm. The enzyme catalyses a 2'-deoxyribonucleoside 5'-diphosphate + ATP = a 2'-deoxyribonucleoside 5'-triphosphate + ADP. It carries out the reaction a ribonucleoside 5'-diphosphate + ATP = a ribonucleoside 5'-triphosphate + ADP. In terms of biological role, major role in the synthesis of nucleoside triphosphates other than ATP. The ATP gamma phosphate is transferred to the NDP beta phosphate via a ping-pong mechanism, using a phosphorylated active-site intermediate. This chain is Nucleoside diphosphate kinase, found in Rickettsia bellii (strain OSU 85-389).